Consider the following 361-residue polypeptide: Trans-2,3-enoyl-CoA reductase-like (361 aa).

Phosphoserine is present on residues serine 33 and serine 35. 4 consecutive transmembrane segments (helical) span residues 139 to 159 (VGWT…YLLF), 181 to 201 (VHLA…ETLF), 215 to 235 (LIKG…YINH), and 309 to 329 (ISFT…LMTI).

It belongs to the steroid 5-alpha reductase family. As to expression, expression is highest in the heart with very low to almost undetectable levels in brain, skeletal muscle, stomach, pancreas, liver, kidney, small intestine, and uterus.

Its subcellular location is the membrane. It localises to the endoplasmic reticulum. This Mus musculus (Mouse) protein is Trans-2,3-enoyl-CoA reductase-like (Tecrl).